The chain runs to 226 residues: uncharacterized protein (226 aa).

The RNase H type-1 domain occupies 71–207 (EPDDITVYFD…ADGLAKKILS (137 aa)).

This is an uncharacterized protein from Bacillus subtilis (strain 168).